Consider the following 594-residue polypeptide: ATP-dependent zinc metalloprotease FtsH 1 (594 aa).

At 1 to 2 (MR) the chain is on the cytoplasmic side. Residues 3–23 (WWAGAALLLAALLFGRPAAAM) traverse the membrane as a helical segment. At 24–92 (EAQPVAYSEF…RVEFVRPADP (69 aa)) the chain is on the extracellular side. The chain crosses the membrane as a helical span at residues 93–113 (IAFRTLLRFIPPLLILGAILW). Residues 114 to 594 (FTRRTAGGSG…ANSRGDEGNQ (481 aa)) are Cytoplasmic-facing. 186-193 (GPPGTGKT) contacts ATP. H408 lines the Zn(2+) pocket. E409 is a catalytic residue. Zn(2+)-binding residues include H412 and D485.

In the central section; belongs to the AAA ATPase family. This sequence in the C-terminal section; belongs to the peptidase M41 family. As to quaternary structure, homohexamer. Zn(2+) serves as cofactor.

It is found in the cell membrane. Its function is as follows. Acts as a processive, ATP-dependent zinc metallopeptidase for both cytoplasmic and membrane proteins. Plays a role in the quality control of integral membrane proteins. The chain is ATP-dependent zinc metalloprotease FtsH 1 from Symbiobacterium thermophilum (strain DSM 24528 / JCM 14929 / IAM 14863 / T).